A 418-amino-acid chain; its full sequence is Putative ion-transport protein YfeO (418 aa).

12 consecutive transmembrane segments (helical) span residues 10 to 30, 54 to 74, 99 to 119, 120 to 140, 149 to 169, 186 to 206, 223 to 243, 258 to 278, 300 to 320, 322 to 342, 343 to 363, and 371 to 391; these read LLLSLPAVAIGIASSLILIVV, DSPLWIIGVLTLTGIAVGLVI, ALPGLIVALILGLAGGVSLGP, EHPIMTVNIALAVAIGARLLP, ILASAGTIGALFGTPVAAALI, LFAPLMAAAAGALTTGLFFHP, ILSGAIVAAIAIAAGMVAVWC, VLVLGIGGFILGILGVIGGPV, DYFLLAVIKLAALVVAAASGF, GGRIFPAVFVGVALGLMLHEH, VPAVPAAITVSCAILGIVLVV, and LFMAAVVVPNTTLLPLLCIVM.

It belongs to the chloride channel (TC 2.A.49) family.

It localises to the cell membrane. The protein is Putative ion-transport protein YfeO of Escherichia coli O139:H28 (strain E24377A / ETEC).